The sequence spans 431 residues: Enolase (431 aa).

(2R)-2-phosphoglycerate is bound at residue Q162. E204 serves as the catalytic Proton donor. Residues D241, E284, and D311 each contribute to the Mg(2+) site. (2R)-2-phosphoglycerate-binding residues include K336, R365, S366, and K387. Residue K336 is the Proton acceptor of the active site.

It belongs to the enolase family. Requires Mg(2+) as cofactor.

It is found in the cytoplasm. The protein resides in the secreted. Its subcellular location is the cell surface. It carries out the reaction (2R)-2-phosphoglycerate = phosphoenolpyruvate + H2O. Its pathway is carbohydrate degradation; glycolysis; pyruvate from D-glyceraldehyde 3-phosphate: step 4/5. Catalyzes the reversible conversion of 2-phosphoglycerate (2-PG) into phosphoenolpyruvate (PEP). It is essential for the degradation of carbohydrates via glycolysis. The polypeptide is Enolase (Sorangium cellulosum (strain So ce56) (Polyangium cellulosum (strain So ce56))).